We begin with the raw amino-acid sequence, 132 residues long: Fatty acid-binding protein, intestinal (132 aa).

Ala2 carries the N-acetylalanine modification. 2 residues coordinate hexadecanoate: Trp83 and Arg107. Residues Trp83 and Arg107 each contribute to the tetradecanoate site.

It belongs to the calycin superfamily. Fatty-acid binding protein (FABP) family. In terms of tissue distribution, expressed in the small intestine. Highest expression levels in the proximal ileum.

Its subcellular location is the cytoplasm. FABPs are thought to play a role in the intracellular transport of long-chain fatty acids and their acyl-CoA esters. FABP2 is probably involved in triglyceride-rich lipoprotein synthesis. Binds saturated long-chain fatty acids with a high affinity, but binds with a lower affinity to unsaturated long-chain fatty acids. FABP2 may also help maintain energy homeostasis by functioning as a lipid sensor. This chain is Fatty acid-binding protein, intestinal (Fabp2), found in Mus musculus (Mouse).